The sequence spans 464 residues: Meiotic plaque component protein 54 (464 aa).

Positions 71–102 (SISTTITPNKSSLKSPRGKRASKNSFDNETKL) are disordered. 3 coiled-coil regions span residues 99 to 119 (ETKL…VNRC), 156 to 193 (KAEC…DHLL), and 231 to 365 (SINS…LQTQ).

In terms of assembly, interacts directly with SPO21/MPC70, NUD1, SPO74 and SPC42. Probable component of a spindle pole body (SPB) complex composed of ADY3, SSP1, DON1, MPC54, SPO21/MPC70, NUD1 and CNM67.

It is found in the prospore membrane. Its subcellular location is the cytoplasm. It localises to the cytoskeleton. The protein resides in the microtubule organizing center. The protein localises to the spindle pole body. It is found in the spindle pole. Functionally, involved in the pathway that organizes the shaping and sizing of the prospore membrane (PSM) during sporulation. The sequence is that of Meiotic plaque component protein 54 (MPC54) from Saccharomyces cerevisiae (strain ATCC 204508 / S288c) (Baker's yeast).